The following is a 308-amino-acid chain: tRNA dimethylallyltransferase (308 aa).

Position 17-24 (G17–S24) interacts with ATP. Residue T19–S24 participates in substrate binding.

This sequence belongs to the IPP transferase family. In terms of assembly, monomer. The cofactor is Mg(2+).

It catalyses the reaction adenosine(37) in tRNA + dimethylallyl diphosphate = N(6)-dimethylallyladenosine(37) in tRNA + diphosphate. Functionally, catalyzes the transfer of a dimethylallyl group onto the adenine at position 37 in tRNAs that read codons beginning with uridine, leading to the formation of N6-(dimethylallyl)adenosine (i(6)A). The protein is tRNA dimethylallyltransferase of Paenarthrobacter aurescens (strain TC1).